The following is a 409-amino-acid chain: MKHLVERFLRYVTFDTQSNPHVAQCPSSPGQLVFAELLKQEMLDFGLSDVTLDEHGYLMAKLPSNVDYDVPPIGFIAHMDTAPDASGKNVNPQFVEDYQGGDIALGLGDEVLSPVQYPDLHNLHGHNLITTDGTTLLGADNKAGIAEILSAIAMLIENPDIPHGDICIGFTPDEEIGRGADLFDVEKFGAKWAYTIDGGPQGELEYENFNAASADVIFHGVSVHPGTAKGKMVNAMNLAAQFQVKMPADQTPETTEGYEGFFHLKSGELGIARSELGYIIRDFDREGLEERKALMQKLVDEMNAGLKHGSVELNITDSYYNMREMVEPYPHIIELAKQAMEACDVEPLIKPIRGGTDGARLSFMGLPCPNIFTGGFNFHGIHEFISVEMMEKSVLVIVKIAELTAKKHG.

Residue His-78 participates in Zn(2+) binding. Asp-80 is an active-site residue. Asp-140 is a binding site for Zn(2+). The Proton acceptor role is filled by Glu-174. Positions 175, 197, and 379 each coordinate Zn(2+).

The protein belongs to the peptidase M20B family. Zn(2+) is required as a cofactor.

It localises to the cytoplasm. It catalyses the reaction Release of the N-terminal residue from a tripeptide.. Its function is as follows. Cleaves the N-terminal amino acid of tripeptides. This Vibrio parahaemolyticus serotype O3:K6 (strain RIMD 2210633) protein is Peptidase T.